The following is a 288-amino-acid chain: NH(3)-dependent NAD(+) synthetase (288 aa).

46 to 53 is a binding site for ATP; it reads GISGGQDS. Aspartate 52 provides a ligand contact to Mg(2+). Arginine 153 provides a ligand contact to deamido-NAD(+). Threonine 173 is a binding site for ATP. Glutamate 178 contacts Mg(2+). Deamido-NAD(+)-binding residues include lysine 186 and aspartate 193. Residues lysine 202 and threonine 224 each coordinate ATP. 273–274 provides a ligand contact to deamido-NAD(+); it reads HK.

This sequence belongs to the NAD synthetase family. As to quaternary structure, homodimer.

The catalysed reaction is deamido-NAD(+) + NH4(+) + ATP = AMP + diphosphate + NAD(+) + H(+). It functions in the pathway cofactor biosynthesis; NAD(+) biosynthesis; NAD(+) from deamido-NAD(+) (ammonia route): step 1/1. In terms of biological role, catalyzes the ATP-dependent amidation of deamido-NAD to form NAD. Uses ammonia as a nitrogen source. This is NH(3)-dependent NAD(+) synthetase from Deinococcus geothermalis (strain DSM 11300 / CIP 105573 / AG-3a).